The sequence spans 181 residues: Peptide deformylase (181 aa).

Fe cation-binding residues include Cys-103 and His-145. Glu-146 is a catalytic residue. A Fe cation-binding site is contributed by His-149.

The protein belongs to the polypeptide deformylase family. Fe(2+) serves as cofactor.

The enzyme catalyses N-terminal N-formyl-L-methionyl-[peptide] + H2O = N-terminal L-methionyl-[peptide] + formate. Functionally, removes the formyl group from the N-terminal Met of newly synthesized proteins. Requires at least a dipeptide for an efficient rate of reaction. N-terminal L-methionine is a prerequisite for activity but the enzyme has broad specificity at other positions. This chain is Peptide deformylase, found in Orientia tsutsugamushi (strain Ikeda) (Rickettsia tsutsugamushi).